We begin with the raw amino-acid sequence, 103 residues long: Small ribosomal subunit protein uS10 (103 aa).

This sequence belongs to the universal ribosomal protein uS10 family. In terms of assembly, part of the 30S ribosomal subunit.

Functionally, involved in the binding of tRNA to the ribosomes. The protein is Small ribosomal subunit protein uS10 of Magnetococcus marinus (strain ATCC BAA-1437 / JCM 17883 / MC-1).